The primary structure comprises 221 residues: Large ribosomal subunit protein uL16y (221 aa).

This sequence belongs to the universal ribosomal protein uL16 family. Component of the small ribosomal subunit. Mature ribosomes consist of a small (40S) and a large (60S) subunit. The 40S subunit contains about 33 different proteins and 1 molecule of RNA (18S). The 60S subunit contains about 49 different proteins and 3 molecules of RNA (25S, 5.8S and 5S).

In Arabidopsis thaliana (Mouse-ear cress), this protein is Large ribosomal subunit protein uL16y (RPL10B).